The primary structure comprises 96 residues: Co-chaperonin GroES (96 aa).

The protein belongs to the GroES chaperonin family. Heptamer of 7 subunits arranged in a ring. Interacts with the chaperonin GroEL.

It is found in the cytoplasm. In terms of biological role, together with the chaperonin GroEL, plays an essential role in assisting protein folding. The GroEL-GroES system forms a nano-cage that allows encapsulation of the non-native substrate proteins and provides a physical environment optimized to promote and accelerate protein folding. GroES binds to the apical surface of the GroEL ring, thereby capping the opening of the GroEL channel. This chain is Co-chaperonin GroES, found in Paraburkholderia phymatum (strain DSM 17167 / CIP 108236 / LMG 21445 / STM815) (Burkholderia phymatum).